The primary structure comprises 402 residues: Protein prenyltransferase alpha subunit repeat-containing protein 1 (402 aa).

Position 2 is an N-acetylalanine (Ala-2). PFTA repeat units follow at residues 87-120 (LIDV…LNPI), 122-155 (DLHL…QETS), 180-213 (EMEV…KLDV), and 219-252 (ELSS…SQTV). Positions 263–282 (LRSEPALVPPKDEEAAVSTE) are disordered. The stretch at 295-328 (EVEFSTDLIDSYPGHETLWCHRRHIFYLQHHLNA) is one PFTA 5 repeat.

It belongs to the protein prenyltransferase subunit alpha family.

The protein is Protein prenyltransferase alpha subunit repeat-containing protein 1 (PTAR1) of Homo sapiens (Human).